Consider the following 154-residue polypeptide: MATATTTTATESPSNSGRRQARYLCLTILGYRKPGMSEEDYRNHMVNVSAPLTKDLMVKYGVKRWTQIHNQSETKALMSQLFDPQMCNLADYDCFSQVVFENIEDYKRMKQDPWYKKHLVGDHENFADTKRSQMTIGWVEEFVRDGQVVEGFKG.

It belongs to the tpcK family.

The catalysed reaction is atrochrysone carboxylate + H(+) = atrochrysone + CO2. It functions in the pathway pigment biosynthesis. Decarboxylase involved in the biosynthesis of the bianthraquinone cladofulvin, a conidial pigment not required for virulence but that plays a role in fitness and resistance to environmental stresses including UV light and low-temperature stress. The pathway begins with the synthesis of atrochrysone thioester by the polyketide synthase (PKS) claG. The atrochrysone carboxyl ACP thioesterase claF then breaks the thioester bond and releases the atrochrysone carboxylic acid from claG. This compound is decarboxylated by claH to yield emodin, which is further converted to chrysophanol hydroquinone by the reductase claC and the dehydratase claB. The cytochrome monooxygenase P450 claM then catalyzes the dimerization of nataloe-emodin to cladofulvin. This Passalora fulva (Tomato leaf mold) protein is Decarboxylase claH.